The sequence spans 320 residues: Putative membrane-bound redox modulator Alx (320 aa).

The Periplasmic segment spans residues 1-6 (MNTVGT). A helical transmembrane segment spans residues 7–27 (PLLWGGFAVVVAIMLAIDLLL). The Cytoplasmic portion of the chain corresponds to 28–43 (QGRRGAHAMTMKQAAA). Residues 44-64 (WSLVWVTLSLLFNAAFWWYLV) form a helical membrane-spanning segment. Residues 65 to 89 (QTEGRAVADPQALAFLTGYLIEKSL) are Periplasmic-facing. Residues 90–110 (AVDNVFVWLMLFSYFSVPAAL) form a helical membrane-spanning segment. The Cytoplasmic segment spans residues 111–113 (QRR). The helical transmembrane segment at 114-134 (VLVYGVLGAIVLRTIMIFTGS) threads the bilayer. Tryptophan 135 is a topological domain (periplasmic). The chain crosses the membrane as a helical span at residues 136 to 156 (LISQFDWILYIFGAFLLFTGV). The Cytoplasmic portion of the chain corresponds to 157 to 198 (KMALAHEDESGIGDKPLVRWLRGHLRMTDTIDNEHFFVRKNG). Residues 199–219 (LLYATPLMLVLILVELSDVIF) form a helical membrane-spanning segment. Residues 220-225 (AVDSIP) lie on the Periplasmic side of the membrane. A helical membrane pass occupies residues 226–246 (AIFAVTTDPFIVLTSNLFAIL). Topologically, residues 247–261 (GLRAMYFLLAGVAER) are cytoplasmic. The chain crosses the membrane as a helical span at residues 262 to 282 (FSMLKYGLAVILVFIGIKMLI). The Periplasmic portion of the chain corresponds to 283 to 286 (VDFY). Residues 287–307 (HIPIAVSLGVVFGILVMTFII) form a helical membrane-spanning segment. The Cytoplasmic segment spans residues 308–320 (NAWVNYRHDKQRG).

This sequence belongs to the TerC family.

It is found in the cell inner membrane. In terms of biological role, has been proposed to be a redox modulator. This chain is Putative membrane-bound redox modulator Alx (alx), found in Shigella flexneri.